Consider the following 44-residue polypeptide: Cytochrome b559 subunit beta (44 aa).

Residues 19 to 35 (WLAIHGIAVPTIFFLGA) form a helical membrane-spanning segment. H23 is a binding site for heme.

This sequence belongs to the PsbE/PsbF family. As to quaternary structure, heterodimer of an alpha subunit and a beta subunit. PSII is composed of 1 copy each of membrane proteins PsbA, PsbB, PsbC, PsbD, PsbE, PsbF, PsbH, PsbI, PsbJ, PsbK, PsbL, PsbM, PsbT, PsbX, PsbY, PsbZ, Psb30/Ycf12, at least 3 peripheral proteins of the oxygen-evolving complex and a large number of cofactors. It forms dimeric complexes. Heme b serves as cofactor.

The protein resides in the plastid. Its subcellular location is the chloroplast thylakoid membrane. Functionally, this b-type cytochrome is tightly associated with the reaction center of photosystem II (PSII). PSII is a light-driven water:plastoquinone oxidoreductase that uses light energy to abstract electrons from H(2)O, generating O(2) and a proton gradient subsequently used for ATP formation. It consists of a core antenna complex that captures photons, and an electron transfer chain that converts photonic excitation into a charge separation. In Chlamydomonas reinhardtii (Chlamydomonas smithii), this protein is Cytochrome b559 subunit beta.